A 160-amino-acid polypeptide reads, in one-letter code: Putative control protein C.MjaVP (160 aa).

Functionally, may be involved in control of expression of the type II restriction enzyme MjaV and/or its methyltransferase M.MjaV. The polypeptide is Putative control protein C.MjaVP (Methanocaldococcus jannaschii (strain ATCC 43067 / DSM 2661 / JAL-1 / JCM 10045 / NBRC 100440) (Methanococcus jannaschii)).